The chain runs to 254 residues: U3 small nucleolar RNA-associated protein NOL7 (254 aa).

A disordered region spans residues 1 to 90; sequence MVQLRPRLSR…ASARRDKTLL (90 aa). Composition is skewed to acidic residues over residues 18 to 31 and 48 to 61; these read MVDE…EEEA and PLDE…EAPE. Residues 71 to 90 are compositionally biased toward basic and acidic residues; it reads EAREEELRVRASARRDKTLL. Lys-127 participates in a covalent cross-link: Glycyl lysine isopeptide (Lys-Gly) (interchain with G-Cter in SUMO2). Ser-129 carries the post-translational modification Phosphoserine. A Glycyl lysine isopeptide (Lys-Gly) (interchain with G-Cter in SUMO2) cross-link involves residue Lys-157. Positions 235 to 254 are disordered; that stretch reads NAKRFKKRWMAKKMKKKTYK.

The protein belongs to the UTP16 family. Part of the small subunit (SSU) processome, composed of more than 70 proteins and the RNA chaperone small nucleolar RNA (snoRNA) U3.

It localises to the nucleus. Its subcellular location is the nucleolus. Functionally, functions as part of the small subunit (SSU) processome, first precursor of the small eukaryotic ribosomal subunit that coordinates the first two steps of ribosome biogenesis in transcription of the primary transcript pre-RNA and pre-18S processing. During the assembly of the SSU processome in the nucleolus, many ribosome biogenesis factors, an RNA chaperone and ribosomal proteins associate with the nascent pre-rRNA and work in concert to generate RNA folding, modifications, rearrangements and cleavage as well as targeted degradation of pre-ribosomal RNA by the RNA exosome. This subunit is required for processing of the 5'-external transcribed spacer sequence (5'ETS) of the primary transcript pre-rRNA to yield the 18S rRNA. Also plays a role in maintaining early pre-rRNA levels, either by assisting in its transcription or stability. The sequence is that of U3 small nucleolar RNA-associated protein NOL7 (Nol7) from Mus musculus (Mouse).